Consider the following 256-residue polypeptide: MTDVARILKEARDQGRMTALDYANQLFDDFMELHGDRHFADDGAVVGGIGYLDDIAVTMVGIQKGSHLQDNLFRNFGQPHPEGYRKALRLMKQAEKFGRPIITFINTAGAYPGVGAEERGQGEAIARNLFEMSDLKVPIIAIIIGEGGSGGALALAVADQVWMLENAIYAVLSPEGFASILWKDGSRATEAAELMKITAKELKRMTVIDRIIPERGYFSSEIVEMIKEHLKTEINQLRSLPLEELLENRYQRFRNF.

Positions 1 to 236 (MTDVARILKE…KEHLKTEINQ (236 aa)) constitute a CoA carboxyltransferase C-terminal domain.

Belongs to the AccA family. As to quaternary structure, acetyl-CoA carboxylase is a heterohexamer composed of biotin carboxyl carrier protein (AccB), biotin carboxylase (AccC) and two subunits each of ACCase subunit alpha (AccA) and ACCase subunit beta (AccD).

It is found in the cytoplasm. The catalysed reaction is N(6)-carboxybiotinyl-L-lysyl-[protein] + acetyl-CoA = N(6)-biotinyl-L-lysyl-[protein] + malonyl-CoA. It participates in lipid metabolism; malonyl-CoA biosynthesis; malonyl-CoA from acetyl-CoA: step 1/1. Its function is as follows. Component of the acetyl coenzyme A carboxylase (ACC) complex. First, biotin carboxylase catalyzes the carboxylation of biotin on its carrier protein (BCCP) and then the CO(2) group is transferred by the carboxyltransferase to acetyl-CoA to form malonyl-CoA. This is Acetyl-coenzyme A carboxylase carboxyl transferase subunit alpha from Streptococcus uberis (strain ATCC BAA-854 / 0140J).